Consider the following 406-residue polypeptide: O-succinylhomoserine sulfhydrylase (406 aa).

At K219 the chain carries N6-(pyridoxal phosphate)lysine.

The protein belongs to the trans-sulfuration enzymes family. MetZ subfamily. In terms of assembly, homotetramer. Requires pyridoxal 5'-phosphate as cofactor.

It catalyses the reaction O-succinyl-L-homoserine + hydrogen sulfide = L-homocysteine + succinate. It participates in amino-acid biosynthesis; L-methionine biosynthesis via de novo pathway; L-homocysteine from O-succinyl-L-homoserine: step 1/1. Functionally, catalyzes the formation of L-homocysteine from O-succinyl-L-homoserine (OSHS) and hydrogen sulfide. This is O-succinylhomoserine sulfhydrylase from Mycobacterium tuberculosis (strain CDC 1551 / Oshkosh).